Reading from the N-terminus, the 149-residue chain is Urease accessory protein UreE (149 aa).

This sequence belongs to the UreE family.

Its subcellular location is the cytoplasm. Functionally, involved in urease metallocenter assembly. Binds nickel. Probably functions as a nickel donor during metallocenter assembly. The chain is Urease accessory protein UreE from Ureaplasma parvum serovar 3 (strain ATCC 700970).